The chain runs to 324 residues: Antihemorrhagic factor jMSF (324 aa).

The first 19 residues, 1–19 (MHFLVALVLLGQIIGSTLS), serve as a signal peptide directing secretion. 2 consecutive Cystatin fetuin-A-type domains span residues 22 to 130 (VRGD…VKCH) and 141 to 254 (RNCP…SDCV). The Cell attachment site signature appears at 23–25 (RGD). 7 cysteine pairs are disulfide-bonded: C28-C315, C85-C96, C110-C129, C143-C146, C205-C217, C230-C253, and C287-C291. N204 is a glycosylation site (N-linked (GlcNAc...) asparagine). Residue N282 is glycosylated (N-linked (GlcNAc...) asparagine).

As to quaternary structure, homodimer. Expressed by the liver.

The protein localises to the secreted. In terms of biological role, suppress hemorrhage induced by metalloproteinases from the same venom (brevilysin-H3, -H4, -H6) and from habu venom (weak inhibition of the metalloproteinases HR2A). The non-hemorrhagic brevilysin-H2 is strongly inhibited by jMSF, whereas the brevilysin-L6 is not inhibited. Does not inhibit serine and cysteine proteases such as trypsin, chymotrypsin, thermolysin, and papain. The inhibition may occur by formation of a non-covalent complex between this protein and the proteinases at their metalloproteinase domains. In Gloydius blomhoffii (Mamushi), this protein is Antihemorrhagic factor jMSF.